Here is a 92-residue protein sequence, read N- to C-terminus: DNA-binding protein HU (92 aa).

Belongs to the bacterial histone-like protein family. As to quaternary structure, homodimer.

In terms of biological role, histone-like DNA-binding protein which is capable of wrapping DNA to stabilize it, and thus to prevent its denaturation under extreme environmental conditions. The polypeptide is DNA-binding protein HU (hup) (Buchnera aphidicola subsp. Baizongia pistaciae (strain Bp)).